The primary structure comprises 310 residues: Tyrosine recombinase XerC (310 aa).

The Core-binding (CB) domain occupies 11 to 97 (NSLQKPLSRF…SLRSFFDFLV (87 aa)). The 181-residue stretch at 118-298 (PLPKNLDVDE…DFQHLAQAYD (181 aa)) folds into the Tyr recombinase domain. Active-site residues include Arg-157, Lys-181, His-250, Arg-253, and His-276. Catalysis depends on Tyr-285, which acts as the O-(3'-phospho-DNA)-tyrosine intermediate.

It belongs to the 'phage' integrase family. XerC subfamily. In terms of assembly, forms a cyclic heterotetrameric complex composed of two molecules of XerC and two molecules of XerD.

It is found in the cytoplasm. Functionally, site-specific tyrosine recombinase, which acts by catalyzing the cutting and rejoining of the recombining DNA molecules. The XerC-XerD complex is essential to convert dimers of the bacterial chromosome into monomers to permit their segregation at cell division. It also contributes to the segregational stability of plasmids. The protein is Tyrosine recombinase XerC of Vibrio atlanticus (strain LGP32) (Vibrio splendidus (strain Mel32)).